A 260-amino-acid chain; its full sequence is tRNA pseudouridine synthase B (260 aa).

A substrate-binding site is contributed by His44. Asp49 functions as the Nucleophile in the catalytic mechanism. Positions 77, 180, and 201 each coordinate substrate.

It belongs to the pseudouridine synthase TruB family. Type 1 subfamily.

The enzyme catalyses uridine(55) in tRNA = pseudouridine(55) in tRNA. In terms of biological role, responsible for synthesis of pseudouridine from uracil-55 in the psi GC loop of transfer RNAs. In Blochmanniella pennsylvanica (strain BPEN), this protein is tRNA pseudouridine synthase B.